A 47-amino-acid polypeptide reads, in one-letter code: Delta-stichotoxin-Hcr3a (47 aa).

Hydroxyproline is present on proline 3. 3 disulfides stabilise this stretch: cysteine 4/cysteine 44, cysteine 6/cysteine 34, and cysteine 27/cysteine 45.

This sequence belongs to the sea anemone sodium channel inhibitory toxin family. Type I subfamily.

It is found in the secreted. It localises to the nematocyst. Inhibits voltage-gated sodium channels (Nav). This chain is Delta-stichotoxin-Hcr3a, found in Radianthus crispa (Leathery sea anemone).